A 309-amino-acid polypeptide reads, in one-letter code: tRNA dimethylallyltransferase (309 aa).

9-16 is an ATP binding site; sequence GPTAVGKT. Position 11-16 (11-16) interacts with substrate; the sequence is TAVGKT. Positions 34–37 are interaction with substrate tRNA; sequence DSMQ.

The protein belongs to the IPP transferase family. In terms of assembly, monomer. It depends on Mg(2+) as a cofactor.

The enzyme catalyses adenosine(37) in tRNA + dimethylallyl diphosphate = N(6)-dimethylallyladenosine(37) in tRNA + diphosphate. Functionally, catalyzes the transfer of a dimethylallyl group onto the adenine at position 37 in tRNAs that read codons beginning with uridine, leading to the formation of N6-(dimethylallyl)adenosine (i(6)A). This chain is tRNA dimethylallyltransferase, found in Enterococcus faecalis (strain ATCC 700802 / V583).